The primary structure comprises 199 residues: uncharacterized protein (199 aa).

Helical transmembrane passes span 22–44, 65–87, and 91–108; these read VVVVGLYYGFLTTFSIGPSYLFL, TGFIAGQLMMFISIYYAPLHLAL, and HTITVLALPYLLFHFFFW.

This sequence belongs to the ycf1 family.

The protein resides in the mitochondrion membrane. This is an uncharacterized protein from Arabidopsis thaliana (Mouse-ear cress).